We begin with the raw amino-acid sequence, 110 residues long: MRLEELKRLQNPLEQVDDGKYLLENHQLAMDVENNIENYPLSLQPLESKVKIIQRAWREYLQRQDPLEKRSPSPPSVSSDKLSSSVSMNTFSDSSTPVSVSRPLAWTVLH.

Residues 47 to 67 (ESKVKIIQRAWREYLQRQDPL) form the IQ domain. The tract at residues 63–99 (RQDPLEKRSPSPPSVSSDKLSSSVSMNTFSDSSTPVS) is disordered. A compositionally biased stretch (low complexity) spans 76 to 87 (SVSSDKLSSSVS). Over residues 88–99 (MNTFSDSSTPVS) the composition is skewed to polar residues.

This chain is IQ domain-containing protein J, found in Mus musculus (Mouse).